The sequence spans 97 residues: Large ribosomal subunit protein eL21 (97 aa).

The protein belongs to the eukaryotic ribosomal protein eL21 family.

The chain is Large ribosomal subunit protein eL21 from Methanospirillum hungatei JF-1 (strain ATCC 27890 / DSM 864 / NBRC 100397 / JF-1).